Reading from the N-terminus, the 466-residue chain is Chromosomal replication initiator protein DnaA (466 aa).

Residues 1–86 are domain I, interacts with DnaA modulators; the sequence is MSLSLWQQCL…EVGTKPVTQT (86 aa). Positions 86-129 are domain II; the sequence is TLKTPVHNVVAPAQTTTAQPQRVAPAARSGWDNVPAPAEPTYRS. Residues 130 to 346 form a domain III, AAA+ region region; the sequence is NVNVKHTFDN…GALNRVIANA (217 aa). 4 residues coordinate ATP: G174, G176, K177, and T178. Residues 347-466 are domain IV, binds dsDNA; it reads NFTGRAITID…FSNLIRTLSS (120 aa).

The protein belongs to the DnaA family. Oligomerizes as a right-handed, spiral filament on DNA at oriC.

It is found in the cytoplasm. Plays an essential role in the initiation and regulation of chromosomal replication. ATP-DnaA binds to the origin of replication (oriC) to initiate formation of the DNA replication initiation complex once per cell cycle. Binds the DnaA box (a 9 base pair repeat at the origin) and separates the double-stranded (ds)DNA. Forms a right-handed helical filament on oriC DNA; dsDNA binds to the exterior of the filament while single-stranded (ss)DNA is stabiized in the filament's interior. The ATP-DnaA-oriC complex binds and stabilizes one strand of the AT-rich DNA unwinding element (DUE), permitting loading of DNA polymerase. After initiation quickly degrades to an ADP-DnaA complex that is not apt for DNA replication. Binds acidic phospholipids. The polypeptide is Chromosomal replication initiator protein DnaA (Salmonella agona (strain SL483)).